The sequence spans 428 residues: Chaperone SurA (428 aa).

Positions 1–13 are cleaved as a signal peptide; that stretch reads MLGALLLSGAVHA. PpiC domains lie at 164–265 and 276–375; these read SEEF…KLLE and RDEV…EVLG.

Its subcellular location is the periplasm. The enzyme catalyses [protein]-peptidylproline (omega=180) = [protein]-peptidylproline (omega=0). Its function is as follows. Chaperone involved in the correct folding and assembly of outer membrane proteins. Recognizes specific patterns of aromatic residues and the orientation of their side chains, which are found more frequently in integral outer membrane proteins. May act in both early periplasmic and late outer membrane-associated steps of protein maturation. This Pseudomonas syringae pv. tomato (strain ATCC BAA-871 / DC3000) protein is Chaperone SurA.